Reading from the N-terminus, the 171-residue chain is 3-hydroxydecanoyl-[acyl-carrier-protein] dehydratase (171 aa).

Residue His70 is part of the active site.

Belongs to the thioester dehydratase family. FabA subfamily. As to quaternary structure, homodimer.

The protein localises to the cytoplasm. The catalysed reaction is a (3R)-hydroxyacyl-[ACP] = a (2E)-enoyl-[ACP] + H2O. It catalyses the reaction (3R)-hydroxydecanoyl-[ACP] = (2E)-decenoyl-[ACP] + H2O. It carries out the reaction (2E)-decenoyl-[ACP] = (3Z)-decenoyl-[ACP]. It functions in the pathway lipid metabolism; fatty acid biosynthesis. Necessary for the introduction of cis unsaturation into fatty acids. Catalyzes the dehydration of (3R)-3-hydroxydecanoyl-ACP to E-(2)-decenoyl-ACP and then its isomerization to Z-(3)-decenoyl-ACP. Can catalyze the dehydratase reaction for beta-hydroxyacyl-ACPs with saturated chain lengths up to 16:0, being most active on intermediate chain length. This chain is 3-hydroxydecanoyl-[acyl-carrier-protein] dehydratase, found in Xanthomonas campestris pv. campestris (strain 8004).